A 193-amino-acid polypeptide reads, in one-letter code: MTDYLLLFVGTILVNNFVLVKFLGLCPFMGVSKKLETAMGMGLATTFVMTLASICAWLIDTWILIPLNLIYLRTLAFILVIAVVVQFTEMVVRKTSPVLYRLLGIFLPLITTNCAVLGVALLNINLGHNFLQSALYGFSAAVGFSLVMVLFTAIRERLAVADVPAPFRGNAIALITAGLMSLAFMGFSGLVKL.

The next 6 membrane-spanning stretches (helical) occupy residues 5–25 (LLLF…FLGL), 39–59 (MGMG…AWLI), 63–83 (ILIP…VIAV), 102–122 (LLGI…VALL), 134–154 (ALYG…FTAI), and 171–191 (AIAL…SGLV).

This sequence belongs to the NqrDE/RnfAE family. The complex is composed of six subunits: RsxA, RsxB, RsxC, RsxD, RsxE and RsxG.

It is found in the cell inner membrane. Functionally, part of a membrane-bound complex that couples electron transfer with translocation of ions across the membrane. Required to maintain the reduced state of SoxR. In Shigella boydii serotype 4 (strain Sb227), this protein is Ion-translocating oxidoreductase complex subunit A.